The following is a 182-amino-acid chain: Adenine phosphoribosyltransferase (182 aa).

This sequence belongs to the purine/pyrimidine phosphoribosyltransferase family. As to quaternary structure, homodimer.

Its subcellular location is the cytoplasm. It catalyses the reaction AMP + diphosphate = 5-phospho-alpha-D-ribose 1-diphosphate + adenine. It functions in the pathway purine metabolism; AMP biosynthesis via salvage pathway; AMP from adenine: step 1/1. Functionally, catalyzes a salvage reaction resulting in the formation of AMP, that is energically less costly than de novo synthesis. The chain is Adenine phosphoribosyltransferase from Shewanella frigidimarina (strain NCIMB 400).